The sequence spans 63 residues: U2-agatoxin-Ao1v (63 aa).

The first 14 residues, 1 to 14, serve as a signal peptide directing secretion; it reads LLLISAMVGSMIAA. The propeptide occupies 15–28; sequence VPEEESLQLSEDER. Cystine bridges form between Cys-31-Cys-47, Cys-38-Cys-52, and Cys-46-Cys-62.

The protein belongs to the neurotoxin 01 (U2-agtx) family. Expressed by the venom gland.

Its subcellular location is the secreted. In terms of biological role, insect active toxin causing rapid but reversible paralysis in crickets. No activity shown in mammals. Does not show effect on mammalian voltage-gated calcium channels. The sequence is that of U2-agatoxin-Ao1v from Agelena orientalis (Funnel-web spider).